Consider the following 132-residue polypeptide: Large ribosomal subunit protein eL8 (132 aa).

Residue lysine 8 is modified to N6-acetyllysine; alternate. Lysine 8 participates in a covalent cross-link: Glycyl lysine isopeptide (Lys-Gly) (interchain with G-Cter in SUMO2); alternate. A Glycyl lysine isopeptide (Lys-Gly) (interchain with G-Cter in SUMO2) cross-link involves residue lysine 36. The residue at position 128 (lysine 128) is an N6-acetyllysine.

The protein belongs to the eukaryotic ribosomal protein eL8 family. In terms of assembly, component of the large ribosomal subunit. Interacts with CRY1. Interacts with DICER1, AGO2, TARBP2, MOV10 and EIF6; they form a large RNA-induced silencing complex (RISC).

The protein resides in the cytoplasm. In terms of biological role, component of the large ribosomal subunit. The ribosome is a large ribonucleoprotein complex responsible for the synthesis of proteins in the cell. This is Large ribosomal subunit protein eL8 (RPL7A) from Sus scrofa (Pig).